The chain runs to 66 residues: MQTGKVKWFNSEKGFGFIEVEGGDDVFVHFSAIQGDGFKTLEEGQEVSFEIVEGNRGPQAANVTKN.

The CSD domain maps to 4–63 (GKVKWFNSEKGFGFIEVEGGDDVFVHFSAIQGDGFKTLEEGQEVSFEIVEGNRGPQAANV).

In terms of assembly, homodimer.

It is found in the cytoplasm. This Bacillus anthracis protein is Cold shock-like protein CspD (cspD).